The chain runs to 165 residues: 6,7-dimethyl-8-ribityllumazine synthase (165 aa).

Residues tyrosine 30, 61 to 63 (ALE), and 90 to 92 (VVI) each bind 5-amino-6-(D-ribitylamino)uracil. A (2S)-2-hydroxy-3-oxobutyl phosphate-binding site is contributed by 95–96 (ET). Residue histidine 98 is the Proton donor of the active site. Residue asparagine 123 coordinates 5-amino-6-(D-ribitylamino)uracil. Residue arginine 137 participates in (2S)-2-hydroxy-3-oxobutyl phosphate binding.

The protein belongs to the DMRL synthase family.

The catalysed reaction is (2S)-2-hydroxy-3-oxobutyl phosphate + 5-amino-6-(D-ribitylamino)uracil = 6,7-dimethyl-8-(1-D-ribityl)lumazine + phosphate + 2 H2O + H(+). The protein operates within cofactor biosynthesis; riboflavin biosynthesis; riboflavin from 2-hydroxy-3-oxobutyl phosphate and 5-amino-6-(D-ribitylamino)uracil: step 1/2. Its function is as follows. Catalyzes the formation of 6,7-dimethyl-8-ribityllumazine by condensation of 5-amino-6-(D-ribitylamino)uracil with 3,4-dihydroxy-2-butanone 4-phosphate. This is the penultimate step in the biosynthesis of riboflavin. In Xanthobacter autotrophicus (strain ATCC BAA-1158 / Py2), this protein is 6,7-dimethyl-8-ribityllumazine synthase.